Here is a 2441-residue protein sequence, read N- to C-terminus: Histone lysine acetyltransferase CREBBP (2441 aa).

2 disordered regions span residues 1-29 (MAEN…DNTD) and 73-168 (LRGG…PATS). The residue at position 2 (Ala-2) is an N-acetylalanine. Positions 20-29 (PGFSANDNTD) are enriched in polar residues. Positions 79–89 (SSINPGIGNVS) are enriched in low complexity. Position 120 is a phosphoserine (Ser-120). Over residues 121 to 168 (PLNQGDSSTPNLPKQAASTSGPTPPASQALNPQAQKQVGLVTSSPATS) the composition is skewed to polar residues. Arg-219 is modified (omega-N-methylarginine). Residues 226–409 (PAPAMQGATS…GKACQVAHCA (184 aa)) form an interaction with SRCAP region. Over residues 261 to 272 (GGMTKMGMTGTT) the composition is skewed to low complexity. A disordered region spans residues 261-292 (GGMTKMGMTGTTSPFGQPFSQTGGQQMGATGV). Residues 273 to 292 (SPFGQPFSQTGGQQMGATGV) show a composition bias toward polar residues. The TAZ-type 1 zinc-finger motif lies at 346–432 (DPEKRKLIQQ…RHDCPVCLPL (87 aa)). Residues His-362, Cys-366, Cys-379, Cys-384, His-393, Cys-397, Cys-403, Cys-408, His-417, Cys-421, Cys-426, and Cys-429 each contribute to the Zn(2+) site. Residues 586-665 (GVRKGWHEHV…KIYKIQKELE (80 aa)) form the KIX domain. 2 positions are modified to asymmetric dimethylarginine: Arg-600 and Arg-624. At Lys-656 the chain carries N6-acetyllysine. The segment covering 792–811 (FLPQNQFPSSSGAMSVNSVG) has biased composition (polar residues). Positions 792 to 1088 (FLPQNQFPSS…SQPRKKIFKP (297 aa)) are disordered. Residues 846-862 (PCPPVTQSPLHPTPPPA) show a composition bias toward pro residues. The span at 894 to 906 (VSSGQTPTPTPGS) shows a compositional bias: polar residues. 2 stretches are compositionally biased toward low complexity: residues 909–930 (SAAQ…VTPQ) and 938–957 (PSVA…HTQP). Residues 974-989 (PTPSSVTSAETSSQQP) show a composition bias toward polar residues. Lys-999 is covalently cross-linked (Glycyl lysine isopeptide (Lys-Gly) (interchain with G-Cter in SUMO1)). Over residues 1012-1022 (TESKGEPRSEM) the composition is skewed to basic and acidic residues. Lys-1015 carries the N6-acetyllysine modification. A Phosphoserine modification is found at Ser-1031. The span at 1033–1060 (VKEETDTTEQKSEPMEVEEKKPEVKVEA) shows a compositional bias: basic and acidic residues. Residues Lys-1034 and Lys-1057 each participate in a glycyl lysine isopeptide (Lys-Gly) (interchain with G-Cter in SUMO1) cross-link. Positions 1068–1080 (SNDTASQSTSPSQ) are enriched in polar residues. Ser-1077 bears the Phosphoserine mark. The Bromo domain occupies 1086 to 1193 (FKPEELRQAL…EVFEQEIDPV (108 aa)). The segment at 1125–1171 (DYFDIVKNPMDLSTIKRKLDTGQYQEPWQYVDDVWLMFNNAWLYNRK) is interaction with histone. Residues 1163 to 1181 (NNAWLYNRKTSRVYKFCSK) are interaction with ASF1A. The residue at position 1217 (Lys-1217) is an N6-acetyllysine. Positions 1324–1701 (KFSAKRLQTT…MLVELHTQGQ (378 aa)) constitute a CBP/p300-type HAT domain. A phosphoserine; by IKKA mark is found at Ser-1383 and Ser-1387. Positions 1434-1436 (YLD) are interaction with histone. Residues 1435–1437 (LDS), 1447–1448 (RT), Ile-1494, Arg-1499, and Trp-1503 contribute to the acetyl-CoA site. A compositionally biased stretch (basic and acidic residues) spans 1557–1569 (LEQEEEERKKEES). Residues 1557 to 1616 (LEQEEEERKKEESTAASETPEGSQGDSKNAKKKNNKKTNKNKSSISRANKKKPSMPNVSN) are disordered. 5 positions are modified to N6-acetyllysine: Lys-1584, Lys-1592, Lys-1593, Lys-1596, and Lys-1598. Residues 1586-1596 (AKKKNNKKTNK) are compositionally biased toward basic residues. The segment at 1703-1751 (RFVYTCNECKHHVETRWHCTVCEDYDLCINCYNTKSHTHKMVKWGLGLD) adopts a ZZ-type zinc-finger fold. 8 residues coordinate Zn(2+): Cys-1708, Cys-1711, Cys-1721, Cys-1724, Cys-1730, Cys-1733, His-1739, and His-1741. N6-acetyllysine occurs at positions 1742 and 1745. Phosphoserine is present on Ser-1764. The segment at 1766–1847 (QESRRLSIQR…KCPVPFCLNI (82 aa)) adopts a TAZ-type 2 zinc-finger fold. Positions 1875–1959 (TRNVPQQSLP…AQPPPAAVEA (85 aa)) are disordered. Pro residues-rich tracts occupy residues 1901–1913 (PQTP…PQPS) and 1944–1955 (PAPPPPAQPPPA). Residues Ser-2064, Ser-2077, and Ser-2080 each carry the phosphoserine modification. Positions 2112-2421 (NQPGMQPQPG…NTPNRSALSS (310 aa)) are disordered. Residues 2113-2138 (QPGMQPQPGLQSQPGMQPQPGMHQQP) are compositionally biased toward low complexity. Positions 2167-2188 (PQGQALNIMNPGHNPNMTNMNP) are enriched in polar residues. Low complexity-rich tracts occupy residues 2197–2216 (QLLQ…QQQQ), 2260–2279 (MGQM…PGLG), and 2286–2304 (IQQA…KQQI). 2 stretches are compositionally biased toward polar residues: residues 2314-2326 (SPQQ…QPQA) and 2333-2342 (QIATSLSNQV). Positions 2348–2371 (VQSPRPQSQPPHSSPSPRIQPQPS) are enriched in pro residues. Ser-2350 is modified (phosphoserine). Residues 2410 to 2421 (QLNTPNRSALSS) are compositionally biased toward polar residues.

As to quaternary structure, part of a complex composed of MSX3, CREBBP/CBP AND EP300/p300; the interaction with MSX3 decreases histone acetylation activity. Interacts with DHX9 (via N-terminus); this interaction mediates association with RNA polymerase II holoenzyme and stimulates CREB-dependent transcriptional activation. Interacts (via transactivation domain and C-terminus) with PCNA; the interaction occurs on chromatin in UV-irradiated damaged cells. Found in a complex containing NCOA2; NCOA3; IKKA; IKKB and IKBKG. Probably part of a complex with HIF1A and EP300. The TAZ-type 1 domain interacts with HIF1A. Interacts with SRCAP, ELF3, MLLT7/FOXO4, N4BP2, NCOA6, PCAF, PELP1, PML, SMAD1, SMAD2, SMAD3, SPIB and TRERF1. Interacts with KLF1; the interaction results in acetylation and enhancement of transcriptional activity of KLF1. Interacts with MAFG; the interaction acetylates MAFG in the basic region and stimulates NFE2 transcriptional activity through increasing its DNA-binding activity. Interacts with IRF2; the interaction acetylates IRF2 and regulates its activity on the H4 promoter. Interacts with IRF3 (when phosphorylated); forming the dsRNA-activated factor 1 (DRAF1), a complex which activates the transcription of the type I interferon genes. Interacts (via N-terminus) with SS18L1/CREST (via C-terminus). Interacts with FOXO1; the interaction acetylates FOXO1 and inhibits its transcriptional activity. Interacts with MECOM and MTDH. Interacts with ASF1A and ASF1B; this promotes histone acetylation. Interacts with acetylated TP53/p53 and with the acetylated histones H3 and H4. Interacts with CITED1 (via C-terminus). Interacts with GATA1; the interaction results in acetylation and enhancement of transcriptional activity of GATA1. Interacts with MAF, CARM1. NCOA3, ZCCHC12, DDX17, DDX5 and CITED4 (C-terminal region). Interacts with phosphorylated CREB1. Interacts with DAXX; the interaction is dependent on CBP sumoylation and results in suppression of the transcriptional activity via recruitment of HDAC2 to DAXX. Interacts with NPAS2, CLOCK and BMAL1. Interacts with SMAD4; negatively regulated by ZBTB7A. Forms a complex with KMT2A and CREB1. Interacts with DDX3X; this interaction may facilitate HNF4A acetylation. Interacts with MSX1; the interaction may inhibit MSX1 autoinactivation. Interacts with MSX3. Interacts with ACSS2. In terms of processing, methylation of the KIX domain by CARM1 blocks association with CREB. This results in the blockade of CREB signaling, and in activation of apoptotic response. Post-translationally, phosphorylated by CHUK/IKKA at Ser-1383 and Ser-1387; these phosphorylations promote cell growth by switching the binding preference of CREBBP from TP53 to NF-kappa-B. Sumoylation negatively regulates transcriptional activity via the recruitment of DAAX. In terms of processing, autoacetylation is required for binding to protein substrates, such as acetylated histones and acetylated TP53/p53. Autoacetylation is induced by glucose and fatty acids.

Its subcellular location is the cytoplasm. The protein resides in the nucleus. The enzyme catalyses L-lysyl-[histone] + acetyl-CoA = N(6)-acetyl-L-lysyl-[histone] + CoA + H(+). It catalyses the reaction L-lysyl-[protein] + acetyl-CoA = N(6)-acetyl-L-lysyl-[protein] + CoA + H(+). The catalysed reaction is (S)-lactoyl-CoA + L-lysyl-[protein] = N(6)-[(S)-lactoyl]-L-lysyl-[protein] + CoA + H(+). Acetylates histones, giving a specific tag for transcriptional activation. Mediates acetylation of histone H3 at 'Lys-18' and 'Lys-27' (H3K18ac and H3K27ac, respectively). Also acetylates non-histone proteins, like DDX21, FBL, IRF2, MAFG, NCOA3, POLR1E/PAF53 and FOXO1. Binds specifically to phosphorylated CREB and enhances its transcriptional activity toward cAMP-responsive genes. Acts as a coactivator of ALX1. Acts as a circadian transcriptional coactivator which enhances the activity of the circadian transcriptional activators: NPAS2-BMAL1 and CLOCK-BMAL1 heterodimers. Acetylates PCNA; acetylation promotes removal of chromatin-bound PCNA and its degradation during nucleotide excision repair (NER). Acetylates POLR1E/PAF53, leading to decreased association of RNA polymerase I with the rDNA promoter region and coding region. Acetylates DDX21, thereby inhibiting DDX21 helicase activity. Acetylates FBL, preventing methylation of 'Gln-105' of histone H2A (H2AQ104me). In addition to protein acetyltransferase, can use different acyl-CoA substrates, such as lactoyl-CoA, and is able to mediate protein lactylation. Catalyzes lactylation of MRE11 in response to DNA damage, thereby promoting DNA double-strand breaks (DSBs) via homologous recombination (HR). Functions as a transcriptional coactivator for SMAD4 in the TGF-beta signaling pathway. In Mus musculus (Mouse), this protein is Histone lysine acetyltransferase CREBBP (Crebbp).